Reading from the N-terminus, the 342-residue chain is S-adenosylmethionine:tRNA ribosyltransferase-isomerase (342 aa).

It belongs to the QueA family. As to quaternary structure, monomer.

The protein resides in the cytoplasm. It carries out the reaction 7-aminomethyl-7-carbaguanosine(34) in tRNA + S-adenosyl-L-methionine = epoxyqueuosine(34) in tRNA + adenine + L-methionine + 2 H(+). It participates in tRNA modification; tRNA-queuosine biosynthesis. Transfers and isomerizes the ribose moiety from AdoMet to the 7-aminomethyl group of 7-deazaguanine (preQ1-tRNA) to give epoxyqueuosine (oQ-tRNA). The protein is S-adenosylmethionine:tRNA ribosyltransferase-isomerase of Campylobacter jejuni subsp. jejuni serotype O:2 (strain ATCC 700819 / NCTC 11168).